Consider the following 310-residue polypeptide: Cytosolic Fe-S cluster assembly factor Nubp1 homolog (310 aa).

4 residues coordinate [4Fe-4S] cluster: Cys9, Cys23, Cys26, and Cys32. 63–70 (GKGGVGKS) is a binding site for ATP. 2 residues coordinate [4Fe-4S] cluster: Cys240 and Cys243.

It belongs to the Mrp/NBP35 ATP-binding proteins family. NUBP1/NBP35 subfamily. In terms of assembly, heterotetramer of 2 Nubp1 and 2 Nubp2 chains. [4Fe-4S] cluster serves as cofactor.

The protein resides in the cytoplasm. Its function is as follows. Component of the cytosolic iron-sulfur (Fe/S) protein assembly (CIA) machinery. Required for maturation of extramitochondrial Fe-S proteins. The Nubp1-Nubp2 heterotetramer forms a Fe-S scaffold complex, mediating the de novo assembly of an Fe-S cluster and its transfer to target apoproteins. The sequence is that of Cytosolic Fe-S cluster assembly factor Nubp1 homolog from Drosophila mojavensis (Fruit fly).